Consider the following 147-residue polypeptide: uncharacterized protein (147 aa).

Positions 23 to 48 are disordered; the sequence is EEVSQPEPNTANDSSTEYKGKSKDDF. Polar residues predominate over residues 28-37; sequence PEPNTANDSS. A compositionally biased stretch (basic and acidic residues) spans 38–48; sequence TEYKGKSKDDF. A helical transmembrane segment spans residues 85–105; the sequence is LMFCIIACSFICAIQFLFFII.

The protein resides in the membrane. This is an uncharacterized protein from Saccharomyces cerevisiae (strain ATCC 204508 / S288c) (Baker's yeast).